The primary structure comprises 183 residues: UPF0114 protein HI_0507 (183 aa).

3 consecutive transmembrane segments (helical) span residues 30 to 50 (LQVP…YKFI), 68 to 88 (IMLG…LVMV), and 150 to 170 (TMMW…ALAY).

Belongs to the UPF0114 family.

It is found in the cell membrane. The sequence is that of UPF0114 protein HI_0507 from Haemophilus influenzae (strain ATCC 51907 / DSM 11121 / KW20 / Rd).